The following is a 108-amino-acid chain: Holo-[acyl-carrier-protein] synthase (108 aa).

2 residues coordinate Mg(2+): Asp9 and Glu52.

This sequence belongs to the P-Pant transferase superfamily. AcpS family. Mg(2+) serves as cofactor.

The protein resides in the cytoplasm. The enzyme catalyses apo-[ACP] + CoA = holo-[ACP] + adenosine 3',5'-bisphosphate + H(+). Its function is as follows. Transfers the 4'-phosphopantetheine moiety from coenzyme A to a Ser of acyl-carrier-protein. The polypeptide is Holo-[acyl-carrier-protein] synthase (Coprothermobacter proteolyticus (strain ATCC 35245 / DSM 5265 / OCM 4 / BT)).